The chain runs to 229 residues: Synaptogyrin-3 (229 aa).

Residue Met-1 is modified to N-acetylmethionine. In terms of domain architecture, MARVEL spans 20 to 172; the sequence is FARRPQTLLR…LTVKALQRFR (153 aa). Helical transmembrane passes span 30–50, 70–90, 105–125, and 148–168; these read VASWVFSIAVFGPIVNEGYVN, FGVALGLGAFLACSCFLLLDV, VLLDLGFSGLWSFLWFVGFCF, and AVITFSFFSILSWVALTVKAL.

The protein belongs to the synaptogyrin family. In terms of assembly, interacts (via N-terminus) with SLC6A3 (via N-terminus). May interact with VMAT2.

The protein localises to the cytoplasmic vesicle. It localises to the secretory vesicle. It is found in the synaptic vesicle membrane. Its subcellular location is the synapse. Functionally, may play a role in regulated exocytosis. May indirectly regulate the activity of the plasma membrane dopamine transporter SLC6A3 and thereby regulate dopamine transport back from the synaptic cleft into the presynaptic terminal. The polypeptide is Synaptogyrin-3 (Bos taurus (Bovine)).